The primary structure comprises 309 residues: Ribosomal RNA small subunit methyltransferase H (309 aa).

S-adenosyl-L-methionine is bound by residues 36–38 (AGH), aspartate 55, phenylalanine 81, aspartate 102, and glutamine 109.

It belongs to the methyltransferase superfamily. RsmH family.

It is found in the cytoplasm. It catalyses the reaction cytidine(1402) in 16S rRNA + S-adenosyl-L-methionine = N(4)-methylcytidine(1402) in 16S rRNA + S-adenosyl-L-homocysteine + H(+). Its function is as follows. Specifically methylates the N4 position of cytidine in position 1402 (C1402) of 16S rRNA. This is Ribosomal RNA small subunit methyltransferase H from Mycoplasma genitalium (strain ATCC 33530 / DSM 19775 / NCTC 10195 / G37) (Mycoplasmoides genitalium).